We begin with the raw amino-acid sequence, 417 residues long: Zinc finger CCCH domain-containing protein ZFN-like (417 aa).

2 C3H1-type zinc fingers span residues 31–58 (PGEP…HPPN) and 75–103 (RLGQ…HPKD). The C3H1-type 3; degenerate zinc-finger motif lies at 121–149 (RPNESERAYYLRTGQCKFGNTCKFHHPQP). 2 consecutive C3H1-type zinc fingers follow at residues 278–306 (RPDQ…HPRE) and 324–352 (RPGE…HPMG). Positions 383 to 417 (SSEGLVESGTAKPRRLSLSETRPIPPGDDNIDDEG) are disordered.

It localises to the nucleus. The protein is Zinc finger CCCH domain-containing protein ZFN-like of Pisum sativum (Garden pea).